Consider the following 556-residue polypeptide: Formate--tetrahydrofolate ligase (556 aa).

65 to 72 (TPAGEGKS) lines the ATP pocket.

Belongs to the formate--tetrahydrofolate ligase family.

It carries out the reaction (6S)-5,6,7,8-tetrahydrofolate + formate + ATP = (6R)-10-formyltetrahydrofolate + ADP + phosphate. It functions in the pathway one-carbon metabolism; tetrahydrofolate interconversion. This is Formate--tetrahydrofolate ligase from Streptococcus pneumoniae (strain 70585).